The primary structure comprises 243 residues: MAHANKNHIESFPPPGKKITIVFVIGGPGSGKGTQCAKIVKQFGFTHLSAGDLLREEAKYDTEQGTMIKNLMNEGKLVSSDLIVKLLFKAMRESGNDKFLVDGFPRNEENRHAYENIIHIEPEFLLFIDCSKEEMERRILNRNQGRDDDNIDTIRRRFDVFQQQTLPVIQYYEKRGKLRKVDGNRQVDEVFEDVKAIFAQLNNQKIHGGQQASGLSRAQMNPLKRWFFDFFCGCFGTKEEARN.

29-34 (GSGKGT) contacts ATP. Positions 49–78 (SAGDLLREEAKYDTEQGTMIKNLMNEGKLV) are NMP. A ribonucleoside 5'-phosphate-binding positions include arginine 55, 76–78 (KLV), and 103–106 (GFPR). Asparagine 110 contributes to the CMP binding site. The LID stretch occupies residues 141 to 149 (NRNQGRDDD). Arginine 142 is a binding site for ATP. A ribonucleoside 5'-phosphate contacts are provided by arginine 146 and arginine 157. ATP is bound at residue arginine 185.

Belongs to the adenylate kinase family. UMP-CMP kinase subfamily. In terms of assembly, monomer. Requires Mg(2+) as cofactor.

It localises to the cytoplasm. The protein resides in the nucleus. The enzyme catalyses UMP + ATP = UDP + ADP. The catalysed reaction is CMP + ATP = CDP + ADP. It carries out the reaction dCMP + ATP = dCDP + ADP. Catalyzes the phosphorylation of pyrimidine nucleoside monophosphates at the expense of ATP. Plays an important role in de novo pyrimidine nucleotide biosynthesis. Has preference for UMP and CMP as phosphate acceptors. This Oryza sativa subsp. japonica (Rice) protein is UMP-CMP kinase 1.